A 122-amino-acid polypeptide reads, in one-letter code: S-adenosylmethionine decarboxylase proenzyme (122 aa).

Residue Ser69 is the Schiff-base intermediate with substrate; via pyruvic acid of the active site. Ser69 bears the Pyruvic acid (Ser); by autocatalysis mark. His74 (proton acceptor; for processing activity) is an active-site residue. The Proton donor; for catalytic activity role is filled by Cys89.

It belongs to the prokaryotic AdoMetDC family. Type 1 subfamily. As to quaternary structure, heterotetramer of two alpha and two beta chains arranged as a dimer of alpha/beta heterodimers. The cofactor is pyruvate. Is synthesized initially as an inactive proenzyme. Formation of the active enzyme involves a self-maturation process in which the active site pyruvoyl group is generated from an internal serine residue via an autocatalytic post-translational modification. Two non-identical subunits are generated from the proenzyme in this reaction, and the pyruvate is formed at the N-terminus of the alpha chain, which is derived from the carboxyl end of the proenzyme. The post-translation cleavage follows an unusual pathway, termed non-hydrolytic serinolysis, in which the side chain hydroxyl group of the serine supplies its oxygen atom to form the C-terminus of the beta chain, while the remainder of the serine residue undergoes an oxidative deamination to produce ammonia and the pyruvoyl group blocking the N-terminus of the alpha chain.

The catalysed reaction is S-adenosyl-L-methionine + H(+) = S-adenosyl 3-(methylsulfanyl)propylamine + CO2. The protein operates within amine and polyamine biosynthesis; S-adenosylmethioninamine biosynthesis; S-adenosylmethioninamine from S-adenosyl-L-methionine: step 1/1. Its function is as follows. Catalyzes the decarboxylation of S-adenosylmethionine to S-adenosylmethioninamine (dcAdoMet), the propylamine donor required for the synthesis of the polyamines spermine and spermidine from the diamine putrescine. In Sulfolobus acidocaldarius (strain ATCC 33909 / DSM 639 / JCM 8929 / NBRC 15157 / NCIMB 11770), this protein is S-adenosylmethionine decarboxylase proenzyme.